Consider the following 213-residue polypeptide: Octanoyltransferase (213 aa).

In terms of domain architecture, BPL/LPL catalytic spans 32–207 (NSTLDEIWLV…NILALLNNPD (176 aa)). Residues 71-78 (RGGQVTYH), 138-140 (SLG), and 151-153 (GLA) contribute to the substrate site. C169 serves as the catalytic Acyl-thioester intermediate.

This sequence belongs to the LipB family.

The protein localises to the cytoplasm. It carries out the reaction octanoyl-[ACP] + L-lysyl-[protein] = N(6)-octanoyl-L-lysyl-[protein] + holo-[ACP] + H(+). Its pathway is protein modification; protein lipoylation via endogenous pathway; protein N(6)-(lipoyl)lysine from octanoyl-[acyl-carrier-protein]: step 1/2. Its function is as follows. Catalyzes the transfer of endogenously produced octanoic acid from octanoyl-acyl-carrier-protein onto the lipoyl domains of lipoate-dependent enzymes. Lipoyl-ACP can also act as a substrate although octanoyl-ACP is likely to be the physiological substrate. In Shigella flexneri serotype 5b (strain 8401), this protein is Octanoyltransferase.